The primary structure comprises 549 residues: Beta-hexosaminidase Amuc_0868 (549 aa).

Residues 1 to 28 form the signal peptide; the sequence is MISKCTFSATVFSLFSLCWGAPSSPVLE. R161 contacts substrate. Residues D190 and H260 each act as charge relay system in the active site. Position 326 (D326) interacts with substrate. E327 acts as the Charge relay system in catalysis. Substrate-binding positions include W393, 420–422, and 474–476; these read YFD and WTE. A disordered region spans residues 526 to 549; sequence GVNYKRPDNGAPAQPKAVITRERR.

This sequence belongs to the glycosyl hydrolase 20 family.

The catalysed reaction is Hydrolysis of terminal non-reducing N-acetyl-D-hexosamine residues in N-acetyl-beta-D-hexosaminides.. With respect to regulation, inhibited strongly by Cu(2+), Zn(2+), Cd(2+) and Ni(2+) ions. No effect on activity with Na(+), Li(+), K(+), Ca(2+), Mg(2+) or Mn(2+) ions. Potentially capable of cleaving the specific glycoside linkages in the process of mucin degradation in human intestinal tract. Hydrolyzes chromogenic substrates pNP-beta-GlcNAc with high activity and pNP-beta-GalNAc to a lesser extent, but not pNP-beta-glucose or pNP-beta-galactose. The chain is Beta-hexosaminidase Amuc_0868 from Akkermansia muciniphila (strain ATCC BAA-835 / DSM 22959 / JCM 33894 / BCRC 81048 / CCUG 64013 / CIP 107961 / Muc).